Here is a 943-residue protein sequence, read N- to C-terminus: Mechanosensitive ion channel protein BA (943 aa).

The interval 1 to 67 is disordered; the sequence is MPNPNDVTID…PPSSSLGFGH (67 aa). Topologically, residues 1-107 are cytoplasmic; sequence MPNPNDVTID…AVLNFSTVTR (107 aa). Positions 14 to 37 are enriched in polar residues; the sequence is TSVSSRGQTGARNNSTNIPNSPSG. The helical transmembrane segment at 108 to 130 threads the bilayer; sequence YLIYIAPLAALLAIPIIVGATAA. Over 131–149 the chain is Lumenal; that stretch reads EDAKIGGVSLPWFFCWVEV. Residues 150-175 traverse the membrane as a helical segment; that stretch reads VWVSLWVCKLVAKVIPFVFQFVCGIV. Residues 176 to 195 are Cytoplasmic-facing; the sequence is SAGTRKYALILRNLEIPITM. The helical transmembrane segment at 196–214 threads the bilayer; the sequence is VLWMIVSLVTFLPIMVYNP. Over 215–233 the chain is Lumenal; that stretch reads RNKREGDTETKSWEKSVKN. The helical transmembrane segment at 234 to 259 threads the bilayer; sequence VLFAFLVCALIFLGEKTLVQLISISY. Residues 260–468 are Cytoplasmic-facing; the sequence is HRKQFDARIK…DQAIHVLDNL (209 aa). Positions 412–447 constitute an EF-hand domain; that stretch reads GKEAEAEECFTMLDRDGNGDISLDEIILAISEIGRT. D425, D427, N429, D431, and E436 together coordinate Ca(2+). Residues 469–489 form a helical membrane-spanning segment; that stretch reads LATIAFIIAVLVFVSFVTSGF. Residues 490-502 lie on the Lumenal side of the membrane; it reads GTVIAAGATSLLS. The chain crosses the membrane as a helical span at residues 503 to 523; that stretch reads LSFVFATTAQEVLGSCIFLFV. The Cytoplasmic segment spans residues 524–943; that stretch reads KHPFDIGDRV…QRRNYESRRL (420 aa). Residues 677–943 form a disordered region; that stretch reads PGAAAEDAAA…QRRNYESRRL (267 aa). Low complexity-rich tracts occupy residues 678 to 687 and 744 to 759; these read GAAAEDAAAA and GASA…AGSA. Polar residues predominate over residues 760–781; the sequence is YSETTLNNTVSEPYQRSFTPNT. Over residues 798 to 810 the composition is skewed to basic and acidic residues; the sequence is TERHLGVSHDSIA. Residues 827-842 are compositionally biased toward polar residues; sequence TTANQSLASPTTMQSE. The segment covering 857–880 has biased composition (low complexity); the sequence is PSSSQYSQQYPQQQSQSPYSYTYS. Over residues 886–904 the composition is skewed to polar residues; the sequence is PESSLQPLEHTTSYNQSLP. Residues 916–943 show a composition bias toward basic and acidic residues; that stretch reads NSLEGHSPHVDPRHMTEEQRRNYESRRL.

This sequence belongs to the MscS (TC 1.A.23) family.

It localises to the cell membrane. It carries out the reaction Ca(2+)(in) = Ca(2+)(out). Functionally, acts as a mechanosensitive calcium channel in response to membrane stretch. Regulates intracellular calcium levels and cell volume for survival in response to hypo-osmotic shock. Involved in maintaining vacuole integrity and protecting the nuclear envelope upon hypo-osmotic shock. seems to contribute to CaCl2 toxicityIn contracstz to mscA, mscB seems to contribute to CaCl(2) toxicity. This chain is Mechanosensitive ion channel protein BA, found in Emericella nidulans (strain FGSC A4 / ATCC 38163 / CBS 112.46 / NRRL 194 / M139) (Aspergillus nidulans).